The primary structure comprises 160 residues: Fimbrial protein (160 aa).

Residues 1–7 (MKSLQKG) constitute a propeptide, leader sequence. An N-methylphenylalanine modification is found at F8. The chain crosses the membrane as a helical span at residues 8–28 (FTLIELMIVVAIIGILAAFAI).

This sequence belongs to the N-Me-Phe pilin family. As to quaternary structure, the pili are polar flexible filaments of about 5.4 nanometers diameter and 2.5 micrometers average length; they consist of only a single polypeptide chain arranged in a helical configuration of five subunits per turn in the assembled pilus.

Its subcellular location is the fimbrium. The protein resides in the membrane. The polypeptide is Fimbrial protein (fimA) (Dichelobacter nodosus (Bacteroides nodosus)).